The following is a 283-amino-acid chain: tRNA-cytidine(32) 2-sulfurtransferase (283 aa).

The PP-loop motif motif lies at 37–42 (SGGKDS). Residues C112, C115, and C203 each coordinate [4Fe-4S] cluster.

The protein belongs to the TtcA family. In terms of assembly, homodimer. Mg(2+) serves as cofactor. The cofactor is [4Fe-4S] cluster.

It is found in the cytoplasm. It carries out the reaction cytidine(32) in tRNA + S-sulfanyl-L-cysteinyl-[cysteine desulfurase] + AH2 + ATP = 2-thiocytidine(32) in tRNA + L-cysteinyl-[cysteine desulfurase] + A + AMP + diphosphate + H(+). It participates in tRNA modification. Functionally, catalyzes the ATP-dependent 2-thiolation of cytidine in position 32 of tRNA, to form 2-thiocytidine (s(2)C32). The sulfur atoms are provided by the cysteine/cysteine desulfurase (IscS) system. In Legionella pneumophila (strain Paris), this protein is tRNA-cytidine(32) 2-sulfurtransferase.